Here is a 277-residue protein sequence, read N- to C-terminus: UBX domain-containing protein 8 (277 aa).

Residue Met-1 is a topological domain, cytoplasmic. A helical transmembrane segment spans residues Ala-2 to Leu-22. Residues Arg-23–Asp-33 lie on the Lumenal side of the membrane. The helical transmembrane segment at Leu-34–Val-54 threads the bilayer. The Cytoplasmic portion of the chain corresponds to Thr-55–Gln-277. The disordered stretch occupies residues Pro-64–Glu-89. The span at His-68 to Glu-89 shows a compositional bias: basic and acidic residues. One can recognise a UBX domain in the interval Thr-193–Val-269.

Interacts with SYVN1 and VCP. Highly expressed in gonads. In testis, expressed in post-meiotic round spermatids, while in ovaries it is expressed in granulosa cells.

The protein localises to the endoplasmic reticulum membrane. Functionally, involved in endoplasmic reticulum-associated degradation (ERAD) for misfolded lumenal proteins, possibly by tethering VCP to the endoplasmic reticulum membrane. May play a role in reproduction. The chain is UBX domain-containing protein 8 (Ubxn8) from Mus musculus (Mouse).